The following is an 82-amino-acid chain: Immediate early response 3-interacting protein 1 (82 aa).

2 consecutive transmembrane segments (helical) span residues 2–22 (AFTL…IAVL) and 62–82 (VMRV…LLFG).

This sequence belongs to the YOS1 family.

It is found in the endoplasmic reticulum membrane. Functionally, regulator of endoplasmic reticulum secretion that acts as a key determinant of brain size. Required for secretion of extracellular matrix proteins. Required for correct brain development by depositing sufficient extracellular matrix proteins for tissue integrity and the proliferation of neural progenitors. Acts as a regulator of the unfolded protein response (UPR). In Bos taurus (Bovine), this protein is Immediate early response 3-interacting protein 1.